The following is a 194-amino-acid chain: Imidazoleglycerol-phosphate dehydratase (194 aa).

Belongs to the imidazoleglycerol-phosphate dehydratase family.

Its subcellular location is the cytoplasm. The enzyme catalyses D-erythro-1-(imidazol-4-yl)glycerol 3-phosphate = 3-(imidazol-4-yl)-2-oxopropyl phosphate + H2O. It functions in the pathway amino-acid biosynthesis; L-histidine biosynthesis; L-histidine from 5-phospho-alpha-D-ribose 1-diphosphate: step 6/9. The chain is Imidazoleglycerol-phosphate dehydratase from Listeria monocytogenes serotype 4a (strain HCC23).